A 316-amino-acid chain; its full sequence is Olfactory receptor 52A5 (316 aa).

The Extracellular segment spans residues 1–27 (MPTFNGSVFMPSAFILIGIPGLESVQC). The N-linked (GlcNAc...) asparagine glycan is linked to N5. Residues 28–48 (WIGIPFSAMYLIGVIGNSLIL) form a helical membrane-spanning segment. Residues 49 to 56 (VIIKYENS) are Cytoplasmic-facing. A helical transmembrane segment spans residues 57–77 (LHIPMYIFLAMLAATDIALNT). The Extracellular portion of the chain corresponds to 78-101 (CILPKMLGIFWFHLPEISFDACLF). The chain crosses the membrane as a helical span at residues 102–122 (QMWLIHSFQAIESGILLAMAL). Over 123 to 141 (DRYVAICIPLRHATIFSQQ) the chain is Cytoplasmic. A helical membrane pass occupies residues 142–162 (FLTHIGLGVTLRAAILIIPSL). The Extracellular portion of the chain corresponds to 163–199 (GLIKCCLKHYRTTVISHSYCEHMAIVKLATEDIRVNK). The helical transmembrane segment at 200-220 (IYGLFVAFAILGFDIIFITLS) threads the bilayer. Residues 221 to 240 (YVQIFITVFQLPQKEARFKA) lie on the Cytoplasmic side of the membrane. A helical transmembrane segment spans residues 241-261 (FNTCIAHICVFLQFYLLAFFS). The Extracellular segment spans residues 262 to 276 (FFTHRFGSHIPPYIH). The helical transmembrane segment at 277-297 (ILLSNLYLLVPPFLNPIVYGV) threads the bilayer. Residues 298-316 (KTKQIRDHIVKVFFFKKVT) are Cytoplasmic-facing.

This sequence belongs to the G-protein coupled receptor 1 family.

Its subcellular location is the cell membrane. Odorant receptor. This Homo sapiens (Human) protein is Olfactory receptor 52A5 (OR52A5).